The following is a 531-amino-acid chain: DnaJ homolog subfamily C member 21 (531 aa).

Residues 3-69 enclose the J domain; the sequence is CHYEALGVRR…QERAWYDNHR (67 aa). Disordered stretches follow at residues 279-311, 327-474, and 502-531; these read FGDG…AELY, KAMK…VPAE, and KATG…RKNR. The segment covering 281 to 311 has biased composition (acidic residues); the sequence is DGSDENEMEEHELKDEEDGKDSDEAEDAELY. Residues S283 and S302 each carry the phosphoserine modification. The segment at 314–338 adopts a C2H2-type 1 zinc-finger fold; it reads LYCPACDKSFKTEKAMKNHEKSKKH. Residues 364 to 375 are compositionally biased toward acidic residues; sequence NPLDDNSEEEME. Residue S370 is modified to Phosphoserine. Positions 381 to 392 are enriched in basic residues; it reads KLSKKQKKKKQK. The span at 393–403 shows a compositional bias: polar residues; sequence PAQNYDDNFNV. Positions 442-453 are enriched in basic and acidic residues; the sequence is KPCDDPKSEAKS. Residues 455-464 are compositionally biased toward basic residues; sequence PKPKGKKTKD. The segment at 482 to 506 adopts a C2H2-type 2 zinc-finger fold; sequence ISCTTCHSEFPSRNKLFDHLKATGH. S511 carries the phosphoserine modification. Over residues 511–522 the composition is skewed to low complexity; it reads SSSSLNSATSSQ.

Interacts with HSPA8, PA2G4 and ZNF622. In terms of tissue distribution, expressed in brain, placenta, kidney and pancreas.

The protein localises to the cytoplasm. It localises to the nucleus. It is found in the nucleolus. In terms of biological role, may act as a co-chaperone for HSP70. May play a role in ribosomal RNA (rRNA) biogenesis, possibly in the maturation of the 60S subunit. Binds the precursor 45S rRNA. This is DnaJ homolog subfamily C member 21 (DNAJC21) from Homo sapiens (Human).